The sequence spans 206 residues: CASP-like protein 1F1 (206 aa).

At 1–43 (MCFQFSILYTCYLAHFGVFPRKYLVMAGIEAKFQQNPPLGTHK) the chain is on the cytoplasmic side. The helical transmembrane segment at 44–64 (LFLGAHICLRILTVTATLTAA) threads the bilayer. Residues 65–92 (WMMITSKQTVEVYGIQVEAKYSYSSAFK) are Extracellular-facing. The chain crosses the membrane as a helical span at residues 93 to 113 (FFSYANAIACGCSVLTLFPAF). The Cytoplasmic segment spans residues 114–124 (SLFYRGSTPMK). Residues 125 to 145 (FFFLFLHDLCMMSLVLAGCAA) form a helical membrane-spanning segment. At 146–177 (ATAIGYVGRYGNNHAGWMAICDQFDEYCNRIR) the chain is on the extracellular side. A helical transmembrane segment spans residues 178–198 (LSLMFSYLAFVFILMLTIMSA). At 199–206 (NKSREIRV) the chain is on the cytoplasmic side.

It belongs to the Casparian strip membrane proteins (CASP) family. As to quaternary structure, homodimer and heterodimers.

The protein resides in the cell membrane. This Vitis vinifera (Grape) protein is CASP-like protein 1F1.